The chain runs to 285 residues: Glutamate racemase (285 aa).

Residues 28–29 (DS) and 60–61 (YG) contribute to the substrate site. The active-site Proton donor/acceptor is Cys92. 93-94 (NT) contacts substrate. Residue Cys204 is the Proton donor/acceptor of the active site. Residue 205–206 (TH) coordinates substrate.

Belongs to the aspartate/glutamate racemases family.

It catalyses the reaction L-glutamate = D-glutamate. It functions in the pathway cell wall biogenesis; peptidoglycan biosynthesis. Functionally, provides the (R)-glutamate required for cell wall biosynthesis. This chain is Glutamate racemase, found in Escherichia fergusonii (strain ATCC 35469 / DSM 13698 / CCUG 18766 / IAM 14443 / JCM 21226 / LMG 7866 / NBRC 102419 / NCTC 12128 / CDC 0568-73).